A 323-amino-acid polypeptide reads, in one-letter code: Thymidine kinase (323 aa).

11-18 is a binding site for ATP; it reads GPHGLGKT. Catalysis depends on glutamate 36, which acts as the Proton acceptor. Tyrosine 54 and glutamine 78 together coordinate substrate. ATP is bound at residue arginine 169. Arginine 175 contributes to the substrate binding site.

It belongs to the herpesviridae thymidine kinase family. As to quaternary structure, homodimer.

The catalysed reaction is thymidine + ATP = dTMP + ADP + H(+). In terms of biological role, catalyzes the transfer of the gamma-phospho group of ATP to thymidine to generate dTMP in the salvage pathway of pyrimidine synthesis. The dTMP serves as a substrate for DNA polymerase during viral DNA replication. Allows the virus to be reactivated and to grow in non-proliferative cells lacking a high concentration of phosphorylated nucleic acid precursors. This Bos taurus (Bovine) protein is Thymidine kinase.